Consider the following 372-residue polypeptide: N-methyl-L-tryptophan oxidase (372 aa).

Asp-4–His-34 serves as a coordination point for FAD. At Cys-307 the chain carries S-8alpha-FAD cysteine.

This sequence belongs to the MSOX/MTOX family. MTOX subfamily. In terms of assembly, monomer. The cofactor is FAD.

It carries out the reaction N(alpha)-methyl-L-tryptophan + O2 + H2O = L-tryptophan + formaldehyde + H2O2. Catalyzes the oxidative demethylation of N-methyl-L-tryptophan. In Salmonella newport (strain SL254), this protein is N-methyl-L-tryptophan oxidase.